The chain runs to 453 residues: Chromosomal replication initiator protein DnaA (453 aa).

Residues 1–71 (MSEKEIWEKV…QAILFDVVGY (71 aa)) are domain I, interacts with DnaA modulators. A domain II region spans residues 71–114 (YEVKPHFITTEELANYSNNETATPKETTKPSTETTEDNHVLGRE). Residues 115-331 (QFNAHNTFDT…GALTRLLAYS (217 aa)) form a domain III, AAA+ region region. ATP contacts are provided by G159, G161, K162, and T163. The domain IV, binds dsDNA stretch occupies residues 332-453 (QLLGKPITTE…ENLEKEIRNV (122 aa)).

It belongs to the DnaA family. Oligomerizes as a right-handed, spiral filament on DNA at oriC.

The protein localises to the cytoplasm. Its function is as follows. Plays an essential role in the initiation and regulation of chromosomal replication. ATP-DnaA binds to the origin of replication (oriC) to initiate formation of the DNA replication initiation complex once per cell cycle. Binds the DnaA box (a 9 base pair repeat at the origin) and separates the double-stranded (ds)DNA. Forms a right-handed helical filament on oriC DNA; dsDNA binds to the exterior of the filament while single-stranded (ss)DNA is stabiized in the filament's interior. The ATP-DnaA-oriC complex binds and stabilizes one strand of the AT-rich DNA unwinding element (DUE), permitting loading of DNA polymerase. After initiation quickly degrades to an ADP-DnaA complex that is not apt for DNA replication. Binds acidic phospholipids. The sequence is that of Chromosomal replication initiator protein DnaA from Staphylococcus aureus (strain bovine RF122 / ET3-1).